The primary structure comprises 1058 residues: Carbamoyl phosphate synthase large chain (1058 aa).

Residues 1–401 (MAKRTDIKKI…CLLKACRSLE (401 aa)) form a carboxyphosphate synthetic domain region. Residues Arg129, Arg169, Gly175, Gly176, Arg208, Ile210, Glu215, Gly241, Ile242, His243, Gln284, and Glu298 each coordinate ATP. Residues 133–327 (KQLMKELGEP…IAKIAAKIAV (195 aa)) form the ATP-grasp 1 domain. Mg(2+)-binding residues include Gln284, Glu298, and Asn300. Gln284, Glu298, and Asn300 together coordinate Mn(2+). The segment at 402-546 (IGVHHNELKG…YSTYEWENES (145 aa)) is oligomerization domain. A carbamoyl phosphate synthetic domain region spans residues 547–929 (IKSEKESVIV…ALYKAFEASY (383 aa)). The region spanning 671–861 (EKALKELGIP…MAQVATKLIL (191 aa)) is the ATP-grasp 2 domain. ATP contacts are provided by Arg707, Ser746, Ile748, Glu752, Gly777, Val778, His779, Ser780, Gln820, and Glu832. Gln820, Glu832, and Asn834 together coordinate Mg(2+). The Mn(2+) site is built by Gln820, Glu832, and Asn834. An MGS-like domain is found at 930-1058 (LHMPEYGTIV…ESRTFSIEAI (129 aa)). The tract at residues 930–1058 (LHMPEYGTIV…ESRTFSIEAI (129 aa)) is allosteric domain.

The protein belongs to the CarB family. In terms of assembly, composed of two chains; the small (or glutamine) chain promotes the hydrolysis of glutamine to ammonia, which is used by the large (or ammonia) chain to synthesize carbamoyl phosphate. Tetramer of heterodimers (alpha,beta)4. It depends on Mg(2+) as a cofactor. The cofactor is Mn(2+).

It catalyses the reaction hydrogencarbonate + L-glutamine + 2 ATP + H2O = carbamoyl phosphate + L-glutamate + 2 ADP + phosphate + 2 H(+). The catalysed reaction is hydrogencarbonate + NH4(+) + 2 ATP = carbamoyl phosphate + 2 ADP + phosphate + 2 H(+). It participates in amino-acid biosynthesis; L-arginine biosynthesis; carbamoyl phosphate from bicarbonate: step 1/1. It functions in the pathway pyrimidine metabolism; UMP biosynthesis via de novo pathway; (S)-dihydroorotate from bicarbonate: step 1/3. Its function is as follows. Large subunit of the glutamine-dependent carbamoyl phosphate synthetase (CPSase). CPSase catalyzes the formation of carbamoyl phosphate from the ammonia moiety of glutamine, carbonate, and phosphate donated by ATP, constituting the first step of 2 biosynthetic pathways, one leading to arginine and/or urea and the other to pyrimidine nucleotides. The large subunit (synthetase) binds the substrates ammonia (free or transferred from glutamine from the small subunit), hydrogencarbonate and ATP and carries out an ATP-coupled ligase reaction, activating hydrogencarbonate by forming carboxy phosphate which reacts with ammonia to form carbamoyl phosphate. The protein is Carbamoyl phosphate synthase large chain of Streptococcus equi subsp. equi (strain 4047).